Reading from the N-terminus, the 186-residue chain is Elongation factor P (186 aa).

The protein belongs to the elongation factor P family.

It localises to the cytoplasm. It functions in the pathway protein biosynthesis; polypeptide chain elongation. Its function is as follows. Involved in peptide bond synthesis. Stimulates efficient translation and peptide-bond synthesis on native or reconstituted 70S ribosomes in vitro. Probably functions indirectly by altering the affinity of the ribosome for aminoacyl-tRNA, thus increasing their reactivity as acceptors for peptidyl transferase. The chain is Elongation factor P from Mycoplasmopsis synoviae (strain 53) (Mycoplasma synoviae).